The following is a 305-amino-acid chain: Glycine--tRNA ligase alpha subunit (305 aa).

This sequence belongs to the class-II aminoacyl-tRNA synthetase family. As to quaternary structure, tetramer of two alpha and two beta subunits.

The protein localises to the cytoplasm. The enzyme catalyses tRNA(Gly) + glycine + ATP = glycyl-tRNA(Gly) + AMP + diphosphate. This Vibrio vulnificus (strain CMCP6) protein is Glycine--tRNA ligase alpha subunit.